The following is a 229-amino-acid chain: Putative N-acetylmannosamine-6-phosphate 2-epimerase (229 aa).

The protein belongs to the NanE family.

It catalyses the reaction an N-acyl-D-glucosamine 6-phosphate = an N-acyl-D-mannosamine 6-phosphate. It functions in the pathway amino-sugar metabolism; N-acetylneuraminate degradation; D-fructose 6-phosphate from N-acetylneuraminate: step 3/5. Its function is as follows. Converts N-acetylmannosamine-6-phosphate (ManNAc-6-P) to N-acetylglucosamine-6-phosphate (GlcNAc-6-P). This chain is Putative N-acetylmannosamine-6-phosphate 2-epimerase, found in Actinobacillus pleuropneumoniae serotype 3 (strain JL03).